The primary structure comprises 128 residues: MANVPADLKYSKEHEWIRVEGNIGIVGITWFAQDQLGDVVFVELPEVGRELKQNEQFGVVESVKTVSDLYCPASGKVVEVNTKLESSPELINQDPYGEGWILKLELSNPAELDNLLDAAAYDAFTKEG.

A Lipoyl-binding domain is found at 23–105; it reads IGIVGITWFA…YGEGWILKLE (83 aa). At Lys-64 the chain carries N6-lipoyllysine.

Belongs to the GcvH family. The glycine cleavage system is composed of four proteins: P, T, L and H. (R)-lipoate is required as a cofactor.

The glycine cleavage system catalyzes the degradation of glycine. The H protein shuttles the methylamine group of glycine from the P protein to the T protein. The sequence is that of Glycine cleavage system H protein from Symbiobacterium thermophilum (strain DSM 24528 / JCM 14929 / IAM 14863 / T).